Consider the following 257-residue polypeptide: Thioredoxin-dependent peroxide reductase, mitochondrial (257 aa).

The transit peptide at 1 to 62 (MAATAGRLFR…FAFSTSSSYH (62 aa)) directs the protein to the mitochondrion. The Thioredoxin domain occupies 64 to 222 (PAVTQHAPYF…TLRLVKAFQF (159 aa)). Position 84 is an N6-succinyllysine (lysine 84). Lysine 92 carries the N6-acetyllysine; alternate modification. Residue lysine 92 is modified to N6-succinyllysine; alternate. Residue cysteine 109 is the Cysteine sulfenic acid (-SOH) intermediate of the active site. Threonine 147 carries the phosphothreonine modification.

This sequence belongs to the peroxiredoxin family. AhpC/Prx1 subfamily. As to quaternary structure, homodimer; disulfide-linked, upon oxidation. 6 homodimers assemble to form a ring-like dodecamer. Interacts with NEK6. Interacts with LRRK2. Interacts with MAP3K13. Interacts with RPS6KC1 (via PX domain). Phosphorylated by LRRK2; phosphorylation reduces perodixase activity. Post-translationally, the enzyme can be inactivated by further oxidation of the cysteine sulfenic acid (C(P)-SOH) to sulphinic acid (C(P)-SO2H) and sulphonic acid (C(P)-SO3H) instead of its condensation to a disulfide bond. In terms of processing, S-palmitoylated. As to expression, predominantly expressed in adrenal cortex. Also detected in liver, renal cortex and medulla, and adrenal medulla (at protein level).

It localises to the mitochondrion matrix. The protein resides in the cytoplasm. Its subcellular location is the early endosome. It catalyses the reaction a hydroperoxide + [thioredoxin]-dithiol = an alcohol + [thioredoxin]-disulfide + H2O. Its function is as follows. Thiol-specific peroxidase that catalyzes the reduction of hydrogen peroxide and organic hydroperoxides to water and alcohols, respectively. Plays a role in cell protection against oxidative stress by detoxifying peroxides. Acts synergistically with MAP3K13 to regulate the activation of NF-kappa-B in the cytosol. Required for the maintenance of physical strength. This chain is Thioredoxin-dependent peroxide reductase, mitochondrial (PRDX3), found in Bos taurus (Bovine).